A 653-amino-acid polypeptide reads, in one-letter code: Sodium-dependent phosphate transporter 2 (653 aa).

Topologically, residues 1 to 5 (MAIDG) are extracellular. Residues 6–26 (YLWMVILGFIIAFILAFSVGA) traverse the membrane as a helical segment. Residues 27–46 (NDVANSFGTAVGSGVVTLRQ) are Cytoplasmic-facing. The helical transmembrane segment at 47 to 67 (ACILASIFETTGSVLLGAKVG) threads the bilayer. Residues 68 to 86 (ETIRKGIIDVNLYNETVET) are Extracellular-facing. N81 carries an N-linked (GlcNAc...) asparagine glycan. A helical membrane pass occupies residues 87 to 107 (LMAGEVSAMVGSAVWQLIASF). Over 108-109 (LR) the chain is Cytoplasmic. Residues 110–130 (LPISGTHCIVGSTIGFSLVAI) traverse the membrane as a helical segment. Residues 131-142 (GTQGVQWMELVK) are Extracellular-facing. The chain crosses the membrane as a helical span at residues 143 to 163 (IVASWFISPLLSGFMSGVLFI). The Cytoplasmic portion of the chain corresponds to 164–190 (LIRIFILKKEDPVPNGLRALPVFYAAT). Residues 191-211 (IAINVFSIMYTGAPVLGLVLP) traverse the membrane as a helical segment. Topologically, residues 212–213 (IW) are extracellular. A helical membrane pass occupies residues 214-234 (AIALISFGVALLFALFVWLFV). Residues 235–483 (CPWMRRKIAG…EEKEEKDTAE (249 aa)) are Cytoplasmic-facing. Residues S253, S256, S259, and S268 each carry the phosphoserine modification. A disordered region spans residues 275–311 (PGAKANDDSTVPLTGSAGEPSGTSEGTSVGNHPRASY). Residues 295-304 (SGTSEGTSVG) show a composition bias toward polar residues. Phosphoserine is present on residues S316 and S385. The segment at 459–478 (SELTDPDQPRDDPAEEEKEE) is disordered. A helical transmembrane segment spans residues 484-504 (VHLLFHFLQVLTACFGSFAHG). Topologically, residues 505-531 (GNDVSNAIGPLVALWLIYEQGAVLQEA) are extracellular. The chain crosses the membrane as a helical span at residues 532 to 552 (VTPVWLLFYGGVGICTGLWVW). At 553 to 572 (GRRVIQTMGKDLTPITPSSG) the chain is on the cytoplasmic side. Residues 573–587 (FTIELASAFTVVIAS) form a helical membrane-spanning segment. Residues 588–594 (NVGLPVS) are Extracellular-facing. Residues 595–610 (TTHCKVGSVVAVGWIR) form a helical membrane-spanning segment. At 611-622 (SRKAVDWRLFRN) the chain is on the cytoplasmic side. The helical transmembrane segment at 623-643 (IFVAWFVTVPVAGLFSAAIMA) threads the bilayer. The Extracellular portion of the chain corresponds to 644 to 653 (LLMYGILPYV).

This sequence belongs to the inorganic phosphate transporter (PiT) (TC 2.A.20) family. As to quaternary structure, homodimer.

The protein localises to the cell membrane. It is found in the apical cell membrane. The enzyme catalyses 2 Na(+)(out) + phosphate(out) = 2 Na(+)(in) + phosphate(in). In terms of biological role, sodium-phosphate symporter which preferentially transports the monovalent form of phosphate with a stoichiometry of two sodium ions per phosphate ion. Plays a critical role in the determination of bone quality and strength by providing phosphate for bone mineralization. Required to maintain normal cerebrospinal fluid phosphate levels. Mediates phosphate-induced calcification of vascular smooth muscle cells (VCMCs) and can functionally compensate for loss of SLC20A1 in VCMCs. Its function is as follows. (Microbial infection) Functions as a retroviral receptor for feline leukemia virus subgroup B (FeLV-B). This chain is Sodium-dependent phosphate transporter 2 (SLC20A2), found in Felis catus (Cat).